Consider the following 343-residue polypeptide: N-acetyl-gamma-glutamyl-phosphate reductase (343 aa).

C147 is a catalytic residue.

Belongs to the NAGSA dehydrogenase family. Type 1 subfamily.

It is found in the cytoplasm. It catalyses the reaction N-acetyl-L-glutamate 5-semialdehyde + phosphate + NADP(+) = N-acetyl-L-glutamyl 5-phosphate + NADPH + H(+). The protein operates within amino-acid biosynthesis; L-arginine biosynthesis; N(2)-acetyl-L-ornithine from L-glutamate: step 3/4. Catalyzes the NADPH-dependent reduction of N-acetyl-5-glutamyl phosphate to yield N-acetyl-L-glutamate 5-semialdehyde. The protein is N-acetyl-gamma-glutamyl-phosphate reductase of Staphylococcus aureus (strain MRSA252).